The primary structure comprises 468 residues: Glutamate--tRNA ligase (468 aa).

The 'HIGH' region signature appears at 8-18 (PSPTGFLHVGG). Zn(2+) contacts are provided by Cys-97, Cys-99, Cys-124, and Asp-126. Positions 236 to 240 (KLSKR) match the 'KMSKS' region motif. Residue Lys-239 participates in ATP binding.

This sequence belongs to the class-I aminoacyl-tRNA synthetase family. Glutamate--tRNA ligase type 1 subfamily. As to quaternary structure, monomer. The cofactor is Zn(2+).

Its subcellular location is the cytoplasm. The enzyme catalyses tRNA(Glu) + L-glutamate + ATP = L-glutamyl-tRNA(Glu) + AMP + diphosphate. In terms of biological role, catalyzes the attachment of glutamate to tRNA(Glu) in a two-step reaction: glutamate is first activated by ATP to form Glu-AMP and then transferred to the acceptor end of tRNA(Glu). The polypeptide is Glutamate--tRNA ligase (Francisella tularensis subsp. novicida (strain U112)).